Here is a 370-residue protein sequence, read N- to C-terminus: Chorismate synthase (370 aa).

Arg48 contacts NADP(+). FMN is bound by residues 125 to 127 (RSS), 241 to 242 (NA), Gly285, 300 to 304 (KPTSS), and Arg326.

This sequence belongs to the chorismate synthase family. As to quaternary structure, homotetramer. FMNH2 is required as a cofactor.

It catalyses the reaction 5-O-(1-carboxyvinyl)-3-phosphoshikimate = chorismate + phosphate. The protein operates within metabolic intermediate biosynthesis; chorismate biosynthesis; chorismate from D-erythrose 4-phosphate and phosphoenolpyruvate: step 7/7. Catalyzes the anti-1,4-elimination of the C-3 phosphate and the C-6 proR hydrogen from 5-enolpyruvylshikimate-3-phosphate (EPSP) to yield chorismate, which is the branch point compound that serves as the starting substrate for the three terminal pathways of aromatic amino acid biosynthesis. This reaction introduces a second double bond into the aromatic ring system. This Jannaschia sp. (strain CCS1) protein is Chorismate synthase.